Consider the following 260-residue polypeptide: Thiamine thiazole synthase (260 aa).

Residues Ala36, 55-56 (EQ), Gly63, and 154-156 (HVD) each bind NAD(+). Fe cation-binding residues include Asp156 and His171. Met224 is a binding site for NAD(+). Arg234 lines the glycine pocket.

The protein belongs to the THI4 family. As to quaternary structure, homooctamer; tetramer of dimers. It depends on Fe(2+) as a cofactor.

The catalysed reaction is hydrogen sulfide + glycine + NAD(+) = ADP-5-ethyl-4-methylthiazole-2-carboxylate + nicotinamide + 3 H2O + H(+). It participates in cofactor biosynthesis; thiamine diphosphate biosynthesis. Functionally, involved in the biosynthesis of the thiazole moiety of thiamine. Catalyzes the conversion of NAD and glycine to adenosine diphosphate 5-(2-hydroxyethyl)-4-methylthiazole-2-carboxylate (ADT), an adenylated thiazole intermediate, using free sulfide as a source of sulfur. In Methanosarcina acetivorans (strain ATCC 35395 / DSM 2834 / JCM 12185 / C2A), this protein is Thiamine thiazole synthase.